The chain runs to 510 residues: Bifunctional pantoate ligase/cytidylate kinase (510 aa).

A pantoate--beta-alanine ligase region spans residues 1–276; sequence MKKVIIRKTE…CGETRLIDHV (276 aa). Residue 29-36 coordinates ATP; the sequence is MGNLHNGH. The Proton donor role is filled by His-36. Gln-61 provides a ligand contact to (R)-pantoate. A beta-alanine-binding site is contributed by Gln-61. ATP is bound at residue 150 to 153; it reads GEKD. Gln-156 is a binding site for (R)-pantoate. Position 187 to 190 (187 to 190) interacts with ATP; that stretch reads LSSR. The interval 277–510 is cytidylate kinase; sequence FLMKRRPIIA…DKIPKETEIK (234 aa).

In the N-terminal section; belongs to the pantothenate synthetase family. The protein in the C-terminal section; belongs to the cytidylate kinase family. Type 1 subfamily.

The protein resides in the cytoplasm. The catalysed reaction is (R)-pantoate + beta-alanine + ATP = (R)-pantothenate + AMP + diphosphate + H(+). The enzyme catalyses CMP + ATP = CDP + ADP. It carries out the reaction dCMP + ATP = dCDP + ADP. Its pathway is cofactor biosynthesis; (R)-pantothenate biosynthesis; (R)-pantothenate from (R)-pantoate and beta-alanine: step 1/1. Functionally, catalyzes the condensation of pantoate with beta-alanine in an ATP-dependent reaction via a pantoyl-adenylate intermediate. Its function is as follows. Catalyzes the transfer of a phosphate group from ATP to either CMP or dCMP to form CDP or dCDP and ADP, respectively. The protein is Bifunctional pantoate ligase/cytidylate kinase of Prochlorococcus marinus (strain MIT 9215).